The following is a 492-amino-acid chain: Adenosylhomocysteinase (492 aa).

Thr68, Asp153, and Glu215 together coordinate substrate. 216–218 (TTT) serves as a coordination point for NAD(+). Residues Lys245 and Asp249 each coordinate substrate. Residues Asn250, 279–284 (GYGDVG), Glu302, Asn337, 358–360 (IGH), and Asn406 each bind NAD(+).

The protein belongs to the adenosylhomocysteinase family. The cofactor is NAD(+).

Its subcellular location is the cytoplasm. The enzyme catalyses S-adenosyl-L-homocysteine + H2O = L-homocysteine + adenosine. Its pathway is amino-acid biosynthesis; L-homocysteine biosynthesis; L-homocysteine from S-adenosyl-L-homocysteine: step 1/1. May play a key role in the regulation of the intracellular concentration of adenosylhomocysteine. In Mycobacterium marinum (strain ATCC BAA-535 / M), this protein is Adenosylhomocysteinase.